The following is a 143-amino-acid chain: Sirohydrochlorin cobaltochelatase (143 aa).

Histidine 18 serves as the catalytic Proton acceptor. Histidine 18 is a binding site for Co(2+). Histidine 18 is a Ni(2+) binding site. Substrate is bound by residues arginine 53 and 78–83 (LAHGVH). Position 83 (histidine 83) interacts with Co(2+). Ni(2+) is bound at residue histidine 83.

Belongs to the CbiX family. CbiXS subfamily. Homotetramer; dimer of dimers.

The catalysed reaction is Co-sirohydrochlorin + 2 H(+) = sirohydrochlorin + Co(2+). It carries out the reaction Ni-sirohydrochlorin + 2 H(+) = sirohydrochlorin + Ni(2+). Its pathway is cofactor biosynthesis; adenosylcobalamin biosynthesis; cob(II)yrinate a,c-diamide from sirohydrochlorin (anaerobic route): step 1/10. Functionally, catalyzes the insertion of Co(2+) into sirohydrochlorin as part of the anaerobic pathway to cobalamin biosynthesis. Involved in the biosynthesis of the unique nickel-containing tetrapyrrole coenzyme F430, the prosthetic group of methyl-coenzyme M reductase (MCR), which plays a key role in methanogenesis and anaerobic methane oxidation (Potential). Catalyzes the insertion of Ni(2+) into sirohydrochlorin to yield Ni-sirohydrochlorin (Potential). The polypeptide is Sirohydrochlorin cobaltochelatase (Methanothermobacter thermautotrophicus (strain ATCC 29096 / DSM 1053 / JCM 10044 / NBRC 100330 / Delta H) (Methanobacterium thermoautotrophicum)).